A 75-amino-acid chain; its full sequence is Protease B inhibitor 2 (75 aa).

A Phosphothreonine modification is found at Thr74.

Belongs to the protease inhibitor I9 family. As to quaternary structure, part of the heterodimeric LMA1 complex together with the thioredoxin II/TRX2. LMA1 binds to the ATPase SEC18.

Its subcellular location is the cytoplasm. Functionally, cytosolic inhibitor of vacuolar proteinase B (yscB), probably regulating protease B activity during limited proteolysis. PBI2 is a component of the LMA1 complex, which is involved in the facilitation of vesicle fusion such as homotypic vacuole and ER-derived COPII vesicle fusion with the Golgi. This chain is Protease B inhibitor 2 (PBI2), found in Saccharomyces cerevisiae (strain ATCC 204508 / S288c) (Baker's yeast).